We begin with the raw amino-acid sequence, 153 residues long: Ribonuclease H (153 aa).

The region spanning 1-142 (MLKTIKIFSD…CDHLARESAK (142 aa)) is the RNase H type-1 domain. Mg(2+) contacts are provided by aspartate 10, glutamate 48, aspartate 70, and aspartate 134.

The protein belongs to the RNase H family. As to quaternary structure, monomer. The cofactor is Mg(2+).

It localises to the cytoplasm. The catalysed reaction is Endonucleolytic cleavage to 5'-phosphomonoester.. Endonuclease that specifically degrades the RNA of RNA-DNA hybrids. This Buchnera aphidicola subsp. Baizongia pistaciae (strain Bp) protein is Ribonuclease H.